Reading from the N-terminus, the 194-residue chain is Large ribosomal subunit protein eL15 (194 aa).

The disordered stretch occupies residues 165–194 (AGKKGRGLMNKGKGAEKVRPGIRANKKLGK).

Belongs to the eukaryotic ribosomal protein eL15 family.

The sequence is that of Large ribosomal subunit protein eL15 from Methanococcus aeolicus (strain ATCC BAA-1280 / DSM 17508 / OCM 812 / Nankai-3).